The primary structure comprises 1012 residues: 5'-3' exoribonuclease 2 (1012 aa).

Residues 264-281 form a CCHC-type zinc finger; that stretch reads GKCFLCGQEGHRAADCEG. Disordered stretches follow at residues 411-439, 888-976, and 990-1012; these read VQQR…AQAS, TFKD…QRQV, and QRKK…PKTA. Residues 415-433 show a composition bias toward basic and acidic residues; it reads QSERFRRDKARDKARDNAR. Polar residues predominate over residues 904-914; it reads ITPKKMNSPQR. 2 stretches are compositionally biased toward basic and acidic residues: residues 918 to 928 and 950 to 962; these read WKKDETPQSRE and PQRE…KKEN. The segment covering 990–1002 has biased composition (basic residues); sequence QRKKEKYLRKKAK.

This sequence belongs to the 5'-3' exonuclease family. XRN2/RAT1 subfamily. Expressed in roots, leaves, stems and flowers.

The protein resides in the nucleus. Its function is as follows. Possesses 5'-&gt;3' exoribonuclease activity. Acts as an endogenous post-transcriptional gene silencing (PTGS) suppressor. Degrades miRNA-derived loops, excised during miRNA maturation in the nucleus. Involved in pre-rRNA processing. Involved in the primary exonucleolytic shortening of the 5' external transcribed spacer (5'ETS), required for endonucleolytic processing at site P by the U3 snoRNP complex. Involved with XRN3 in the 5'-end processing of 5.8S and 25S rRNAs. Contributes with XRN3 to polyadenylation-dependent nuclear RNA surveillance. Involved in the degradation of aberrant polyadenylated pre-rRNA through 5'-end processing. This chain is 5'-3' exoribonuclease 2, found in Arabidopsis thaliana (Mouse-ear cress).